The sequence spans 506 residues: Maturase K (506 aa).

The protein belongs to the intron maturase 2 family. MatK subfamily.

The protein resides in the plastid. Its subcellular location is the chloroplast. Functionally, usually encoded in the trnK tRNA gene intron. Probably assists in splicing its own and other chloroplast group II introns. This Trifolium hirtum (Rose clover) protein is Maturase K.